We begin with the raw amino-acid sequence, 275 residues long: Trans-aconitate 2-methyltransferase (275 aa).

It belongs to the methyltransferase superfamily. Tam family.

It is found in the cytoplasm. It carries out the reaction trans-aconitate + S-adenosyl-L-methionine = (E)-3-(methoxycarbonyl)pent-2-enedioate + S-adenosyl-L-homocysteine. Its function is as follows. Catalyzes the S-adenosylmethionine monomethyl esterification of trans-aconitate. This Pseudomonas aeruginosa (strain UCBPP-PA14) protein is Trans-aconitate 2-methyltransferase.